The following is a 466-amino-acid chain: Methylenetetrahydrofolate--tRNA-(uracil-5-)-methyltransferase TrmFO (466 aa).

14-19 (GGGLAG) is a binding site for FAD.

It belongs to the MnmG family. TrmFO subfamily. FAD serves as cofactor.

It localises to the cytoplasm. It carries out the reaction uridine(54) in tRNA + (6R)-5,10-methylene-5,6,7,8-tetrahydrofolate + NADH + H(+) = 5-methyluridine(54) in tRNA + (6S)-5,6,7,8-tetrahydrofolate + NAD(+). The catalysed reaction is uridine(54) in tRNA + (6R)-5,10-methylene-5,6,7,8-tetrahydrofolate + NADPH + H(+) = 5-methyluridine(54) in tRNA + (6S)-5,6,7,8-tetrahydrofolate + NADP(+). Catalyzes the folate-dependent formation of 5-methyl-uridine at position 54 (M-5-U54) in all tRNAs. The protein is Methylenetetrahydrofolate--tRNA-(uracil-5-)-methyltransferase TrmFO of Brucella suis (strain ATCC 23445 / NCTC 10510).